Reading from the N-terminus, the 227-residue chain is Cytochrome c oxidase subunit 2 (227 aa).

Residues methionine 1 to serine 14 lie on the Mitochondrial intermembrane side of the membrane. A helical membrane pass occupies residues proline 15–methionine 45. The Mitochondrial matrix segment spans residues leucine 46–glutamine 59. Residues glutamate 60–methionine 87 traverse the membrane as a helical segment. Residues aspartate 88–isoleucine 227 are Mitochondrial intermembrane-facing. The Cu cation site is built by histidine 161, cysteine 196, glutamate 198, cysteine 200, histidine 204, and methionine 207. Glutamate 198 is a Mg(2+) binding site.

The protein belongs to the cytochrome c oxidase subunit 2 family. Component of the cytochrome c oxidase (complex IV, CIV), a multisubunit enzyme composed of 14 subunits. The complex is composed of a catalytic core of 3 subunits MT-CO1, MT-CO2 and MT-CO3, encoded in the mitochondrial DNA, and 11 supernumerary subunits COX4I, COX5A, COX5B, COX6A, COX6B, COX6C, COX7A, COX7B, COX7C, COX8 and NDUFA4, which are encoded in the nuclear genome. The complex exists as a monomer or a dimer and forms supercomplexes (SCs) in the inner mitochondrial membrane with NADH-ubiquinone oxidoreductase (complex I, CI) and ubiquinol-cytochrome c oxidoreductase (cytochrome b-c1 complex, complex III, CIII), resulting in different assemblies (supercomplex SCI(1)III(2)IV(1) and megacomplex MCI(2)III(2)IV(2)). Found in a complex with TMEM177, COA6, COX18, COX20, SCO1 and SCO2. Interacts with TMEM177 in a COX20-dependent manner. Interacts with COX20. Interacts with COX16. Requires Cu cation as cofactor.

It localises to the mitochondrion inner membrane. The enzyme catalyses 4 Fe(II)-[cytochrome c] + O2 + 8 H(+)(in) = 4 Fe(III)-[cytochrome c] + 2 H2O + 4 H(+)(out). Functionally, component of the cytochrome c oxidase, the last enzyme in the mitochondrial electron transport chain which drives oxidative phosphorylation. The respiratory chain contains 3 multisubunit complexes succinate dehydrogenase (complex II, CII), ubiquinol-cytochrome c oxidoreductase (cytochrome b-c1 complex, complex III, CIII) and cytochrome c oxidase (complex IV, CIV), that cooperate to transfer electrons derived from NADH and succinate to molecular oxygen, creating an electrochemical gradient over the inner membrane that drives transmembrane transport and the ATP synthase. Cytochrome c oxidase is the component of the respiratory chain that catalyzes the reduction of oxygen to water. Electrons originating from reduced cytochrome c in the intermembrane space (IMS) are transferred via the dinuclear copper A center (CU(A)) of subunit 2 and heme A of subunit 1 to the active site in subunit 1, a binuclear center (BNC) formed by heme A3 and copper B (CU(B)). The BNC reduces molecular oxygen to 2 water molecules using 4 electrons from cytochrome c in the IMS and 4 protons from the mitochondrial matrix. The sequence is that of Cytochrome c oxidase subunit 2 (MT-CO2) from Maxomys bartelsii (Bartels's Javan maxomys).